The chain runs to 401 residues: MKPVAISLSLLLLVTLLPGSEQRKVDNPDFQPNCLVGGPDIYDPAQSEKVLWFDVNLDLPPRQRFQQIAKAYKKEIHAVFDVLNYFLTIIPGVNAWELIGNMTASALDKGMIMNPYRDEVLGIAEVLDVPLGNLVFLNLFYEMSRFCTSIVAQTEDNKDLYHARNLDFGQLFVWDIAAQSWGLTEALKKVSVNINFFKNGKLLFKGSTLAGHVGVLTAMKPHKFSLSMNAKVQPDIINVAKWYMGAYENTDLQFVMYFDRWLFENCDDFQCAREKIAGVKLLTGAYFILGGANPGEGSVLVRNTTSVQFERKLFDGANDWFLLQTNYDPDKDPLFIDNRRDPGNACMNKLTRANVGMKGIFTVLSSKPNLNKTTVHTVIMSVTKGYFETFIQKCPNPCWAF.

An N-terminal signal peptide occupies residues 1–22 (MKPVAISLSLLLLVTLLPGSEQ). N-linked (GlcNAc...) asparagine glycosylation is found at asparagine 101, asparagine 303, and asparagine 371.

It belongs to the acid ceramidase family.

It carries out the reaction an N-acyl-sphingoid base + H2O = a sphingoid base + a fatty acid. The catalysed reaction is an N-acylsphing-4-enine + H2O = sphing-4-enine + a fatty acid. The enzyme catalyses an N-acyl-15-methylhexadecasphing-4-enine + H2O = 15-methylhexadecasphing-4-enine + a fatty acid. In terms of biological role, catalyzes the hydrolysis of ceramides into sphingoid base and free fatty acid. C.elegans contain specific sphingoid bases, which are unique or different in structure compared to the sphingoid bases found in other animals. Two examples of these distinctive compounds are: 15-methylhexadecasphinganine and 15-methylhexadecasphing-4-enine. The chain is Probable acid ceramidase from Caenorhabditis elegans.